Here is a 206-residue protein sequence, read N- to C-terminus: MARYLGPKLKLSRREGTDLFLKSGVRAIDTKCKIDNAPGVHGARRGRLSEYGVQLREKQKVRRMYGVLEKQFRNYYKDAARLKGNTGENLLQLLEGRLDNVVYRMGFGATRAESRQLVSHKSILVNGKVVNVPSFKVAANDVVSIREKAKQQSRIKAALEVAEQREKPTWIEVDAGKMEGTFKRLPERSDLSADINEHLIVELYSK.

Residues 96–158 (GRLDNVVYRM…AKQQSRIKAA (63 aa)) form the S4 RNA-binding domain.

It belongs to the universal ribosomal protein uS4 family. Part of the 30S ribosomal subunit. Contacts protein S5. The interaction surface between S4 and S5 is involved in control of translational fidelity.

One of the primary rRNA binding proteins, it binds directly to 16S rRNA where it nucleates assembly of the body of the 30S subunit. Its function is as follows. With S5 and S12 plays an important role in translational accuracy. This Aliivibrio fischeri (strain ATCC 700601 / ES114) (Vibrio fischeri) protein is Small ribosomal subunit protein uS4.